Reading from the N-terminus, the 109-residue chain is Large ribosomal subunit protein uL24 (109 aa).

It belongs to the universal ribosomal protein uL24 family. As to quaternary structure, part of the 50S ribosomal subunit.

Its function is as follows. One of two assembly initiator proteins, it binds directly to the 5'-end of the 23S rRNA, where it nucleates assembly of the 50S subunit. In terms of biological role, one of the proteins that surrounds the polypeptide exit tunnel on the outside of the subunit. In Syntrophotalea carbinolica (strain DSM 2380 / NBRC 103641 / GraBd1) (Pelobacter carbinolicus), this protein is Large ribosomal subunit protein uL24.